Reading from the N-terminus, the 253-residue chain is Ubiquinone/menaquinone biosynthesis C-methyltransferase UbiE (253 aa).

S-adenosyl-L-methionine-binding positions include threonine 76, aspartate 97, asparagine 125–alanine 126, and serine 142.

The protein belongs to the class I-like SAM-binding methyltransferase superfamily. MenG/UbiE family.

It catalyses the reaction a 2-demethylmenaquinol + S-adenosyl-L-methionine = a menaquinol + S-adenosyl-L-homocysteine + H(+). The catalysed reaction is a 2-methoxy-6-(all-trans-polyprenyl)benzene-1,4-diol + S-adenosyl-L-methionine = a 5-methoxy-2-methyl-3-(all-trans-polyprenyl)benzene-1,4-diol + S-adenosyl-L-homocysteine + H(+). It participates in quinol/quinone metabolism; menaquinone biosynthesis; menaquinol from 1,4-dihydroxy-2-naphthoate: step 2/2. Its pathway is cofactor biosynthesis; ubiquinone biosynthesis. Methyltransferase required for the conversion of demethylmenaquinol (DMKH2) to menaquinol (MKH2) and the conversion of 2-polyprenyl-6-methoxy-1,4-benzoquinol (DDMQH2) to 2-polyprenyl-3-methyl-6-methoxy-1,4-benzoquinol (DMQH2). The protein is Ubiquinone/menaquinone biosynthesis C-methyltransferase UbiE of Xanthomonas campestris pv. campestris (strain ATCC 33913 / DSM 3586 / NCPPB 528 / LMG 568 / P 25).